Reading from the N-terminus, the 24-residue chain is Lectin (24 aa).

Belongs to the leguminous lectin family. In terms of assembly, homotetramer.

In terms of biological role, agglutinates erythrocytes of blood group A. Binds in decreasing order of affinity: N-acetyl-D-galactosamine, D-galactose, and D-galactosamine. The sequence is that of Lectin from Crotalaria pallida (Smooth rattlebox).